We begin with the raw amino-acid sequence, 370 residues long: ECF RNA polymerase sigma factor SigG (370 aa).

The interval 63-129 is sigma-70 factor domain-2; the sequence is EPYRRELLAH…LTALEGRRRR (67 aa). Positions 85–88 match the Polymerase core binding motif; sequence DLVQ. The tract at residues 180-232 is sigma-70 factor domain-4; sequence LAFVAALQHLSPRQRAVLLLRDVLQWKSAEVADAIGTSTVAVNSLLQRARSQL. The H-T-H motif DNA-binding region spans 207-226; it reads SAEVADAIGTSTVAVNSLLQ.

This sequence belongs to the sigma-70 factor family. ECF subfamily. As to quaternary structure, interacts transiently with the RNA polymerase catalytic core formed by RpoA, RpoB, RpoC and RpoZ (2 alpha, 1 beta, 1 beta' and 1 omega subunit) to form the RNA polymerase holoenzyme that can initiate transcription.

Its function is as follows. Sigma factors are initiation factors that promote the attachment of RNA polymerase to specific initiation sites and are then released. Extracytoplasmic function (ECF) sigma factors are held in an inactive form by a cognate anti-sigma factor until released, although no anti-sigma factor is known for this protein. May be involved in host intracellular survival after infection (strains H37Rv and CDC 1551). A role in the SOS response is controversial; it has been seen in strain CDC 1551 but not in H37Rv. This chain is ECF RNA polymerase sigma factor SigG (sigG), found in Mycobacterium tuberculosis (strain CDC 1551 / Oshkosh).